Consider the following 309-residue polypeptide: Probable lipid kinase YegS-like (309 aa).

The DAGKc domain occupies 1–133 (MPLTHIRLLL…IDIIRANNNY (133 aa)). Residues serine 39, 65-71 (GDGSLNE), and threonine 95 each bind ATP. Mg(2+) is bound by residues leucine 214, aspartate 217, and leucine 219. Glutamate 273 (proton acceptor) is an active-site residue.

The protein belongs to the diacylglycerol/lipid kinase family. YegS lipid kinase subfamily. Requires Mg(2+) as cofactor. Ca(2+) serves as cofactor.

Its subcellular location is the cytoplasm. In terms of biological role, probably phosphorylates lipids; the in vivo substrate is unknown. The chain is Probable lipid kinase YegS-like from Shewanella frigidimarina (strain NCIMB 400).